We begin with the raw amino-acid sequence, 121 residues long: Large ribosomal subunit protein uL14c (121 aa).

The protein belongs to the universal ribosomal protein uL14 family. Part of the 50S ribosomal subunit.

It localises to the plastid. It is found in the chloroplast. Binds to 23S rRNA. The protein is Large ribosomal subunit protein uL14c of Guillardia theta (Cryptophyte).